The primary structure comprises 200 residues: dTTP/UTP pyrophosphatase (200 aa).

The active-site Proton acceptor is the Asp-80.

The protein belongs to the Maf family. YhdE subfamily. It depends on a divalent metal cation as a cofactor.

It localises to the cytoplasm. It carries out the reaction dTTP + H2O = dTMP + diphosphate + H(+). It catalyses the reaction UTP + H2O = UMP + diphosphate + H(+). Its function is as follows. Nucleoside triphosphate pyrophosphatase that hydrolyzes dTTP and UTP. May have a dual role in cell division arrest and in preventing the incorporation of modified nucleotides into cellular nucleic acids. The sequence is that of dTTP/UTP pyrophosphatase from Pasteurella multocida (strain Pm70).